Here is a 448-residue protein sequence, read N- to C-terminus: Putative RNA-ligase (448 aa).

Belongs to the asfivirus M448R family.

It is found in the virion. In Ornithodoros (relapsing fever ticks), this protein is Putative RNA-ligase.